The primary structure comprises 202 residues: 3-isopropylmalate dehydratase small subunit (202 aa).

Belongs to the LeuD family. LeuD type 1 subfamily. In terms of assembly, heterodimer of LeuC and LeuD.

It carries out the reaction (2R,3S)-3-isopropylmalate = (2S)-2-isopropylmalate. It participates in amino-acid biosynthesis; L-leucine biosynthesis; L-leucine from 3-methyl-2-oxobutanoate: step 2/4. Catalyzes the isomerization between 2-isopropylmalate and 3-isopropylmalate, via the formation of 2-isopropylmaleate. This is 3-isopropylmalate dehydratase small subunit from Rhizobium etli (strain CIAT 652).